A 146-amino-acid chain; its full sequence is Hemoglobin subunit beta (146 aa).

Positions 2–146 (EWTDFERATI…VVNSLGRQYH (145 aa)) constitute a Globin domain. Heme b contacts are provided by H63 and H92.

It belongs to the globin family. Heterotetramer of two alpha chains and two beta chains. Can form polymers. As to expression, red blood cells.

Its function is as follows. Involved in oxygen transport from gills to the various peripheral tissues. This Chelidonichthys kumu (Bluefin gurnard) protein is Hemoglobin subunit beta (hbb).